The primary structure comprises 552 residues: Phosphoribosylaminoimidazole carboxylase (552 aa).

The 188-residue stretch at 108–295 folds into the ATP-grasp domain; the sequence is KQHLQVFKIA…QFEAHLRAIC (188 aa). 134-189 contributes to the ATP binding site; sequence GQEFGYPFVLKSKTLAYDGRGNYVVHQPSEIPTAIKALGDRPLYVEKFVPFSMEIA.

In the C-terminal section; belongs to the AIR carboxylase family. Class I subfamily.

The enzyme catalyses 5-amino-1-(5-phospho-D-ribosyl)imidazole-4-carboxylate + H(+) = 5-amino-1-(5-phospho-beta-D-ribosyl)imidazole + CO2. Its pathway is purine metabolism; IMP biosynthesis via de novo pathway; 5-amino-1-(5-phospho-D-ribosyl)imidazole-4-carboxylate from 5-amino-1-(5-phospho-D-ribosyl)imidazole (carboxylase route): step 1/1. The sequence is that of Phosphoribosylaminoimidazole carboxylase (ade6) from Schizosaccharomyces pombe (strain 972 / ATCC 24843) (Fission yeast).